Here is a 633-residue protein sequence, read N- to C-terminus: Basic helix-loop-helix ARNT-like protein 1 (633 aa).

Residues 1–65 (MADQRMDISS…GMDTDKDDQH (65 aa)) form a disordered region. At Ser-17 the chain carries Phosphoserine; by GSK3-beta. Residues 24–33 (ISSSLSTSGV) show a composition bias toward polar residues. Positions 36-41 (NRKRKG) match the Nuclear localization signal motif. A bHLH domain is found at 79–132 (NAREAHSQIEKRRRDKMNSFIDELASLVPTCNAMSRKLDKLTVLRMAVQHMKTL). Ser-85 is subject to Phosphoserine. Ser-97 is subject to Phosphoserine; by CK2. Residues 149–159 (LSDDELKHLIL) carry the Nuclear export signal 1 motif. One can recognise a PAS 1 domain in the interval 150-222 (SDDELKHLIL…EQLSSSDTAP (73 aa)). Lys-259 participates in a covalent cross-link: Glycyl lysine isopeptide (Lys-Gly) (interchain with G-Cter in SUMO2 and SUMO3). Lys-266 participates in a covalent cross-link: Glycyl lysine isopeptide (Lys-Gly) (interchain with G-Cter in SUMO). Positions 333–403 (PQPVNGEIRV…ECHRQVLQTR (71 aa)) constitute a PAS 2 domain. Positions 368–376 (LAYLPQELL) match the Nuclear export signal 2 motif. A PAC domain is found at 408 to 451 (TNCYKFKIKDGSFITLRSRWFSFMNPWTKEVEYIVSTNTVVSTS). Disordered stretches follow at residues 469 to 499 (SMDS…RAGA) and 518 to 578 (GSSP…DNSS). The segment covering 518-528 (GSSPSSCGSSP) has biased composition (low complexity). Lys-545 carries the post-translational modification N6-acetyllysine. Residues 563 to 578 (GQIQDSSGYPYSDNSS) are compositionally biased toward polar residues.

In terms of assembly, component of the circadian clock oscillator which includes the CRY1/2 proteins, CLOCK or NPAS2, BMAL1 or BMAL2, CSNK1D and/or CSNK1E, TIMELESS and the PER1/2/3 proteins. Forms a heterodimer with CLOCK. The CLOCK-BMAL1 heterodimer is required for E-box-dependent transactivation, for CLOCK nuclear translocation and degradation, and, for phosphorylation of both CLOCK and BMAL1. Interacts with PER1, PER2, CRY1 and CRY2 and this interaction requires a translocation to the nucleus. Interaction of the CLOCK-BMAL1 heterodimer with PER or CRY inhibits transcription activation. Interacts with NPAS2. In terms of processing, ubiquitinated, leading to its proteasomal degradation. Deubiquitinated by USP9X. O-glycosylated; contains O-GlcNAc. O-glycosylation by OGT prevents protein degradation by inhibiting ubiquitination. It also stabilizes the CLOCK-BMAL1 heterodimer thereby increasing CLOCK-BMAL1-mediated transcription of genes in the negative loop of the circadian clock such as PER1/2/3 and CRY1/2. Post-translationally, acetylated on Lys-545 by CLOCK during the repression phase of the circadian cycle. Acetylation facilitates recruitment of CRY1 protein and initiates the repression phase of the circadian cycle. Acetylated at Lys-545 by KAT5 during the activation phase of the cycle, leading to recruitment of the positive transcription elongation factor b (P-TEFb) and BRD4, followed by productive elongation of circadian transcripts. Deacetylated by SIRT1, which may result in decreased protein stability. In terms of processing, phosphorylated upon dimerization with CLOCK. Phosphorylation enhances the transcriptional activity, alters the subcellular localization and decreases the stability of the CLOCK-BMAL1 heterodimer by promoting its degradation. Phosphorylation shows circadian variations in the liver with a peak between CT10 to CT14. Phosphorylation at Ser-97 by CK2 is essential for its nuclear localization, its interaction with CLOCK and controls CLOCK nuclear entry. Dephosphorylation at Ser-85 is important for dimerization with CLOCK and transcriptional activity. Sumoylated on Lys-266 upon dimerization with CLOCK. Predominantly conjugated to poly-SUMO2/3 rather than SUMO1 and the level of these conjugates undergo rhythmic variation, peaking at CT9-CT12. Sumoylation localizes it exclusively to the PML body and promotes its ubiquitination in the PML body, ubiquitin-dependent proteasomal degradation and the transcriptional activity of the CLOCK-BMAL1 heterodimer. Post-translationally, undergoes lysosome-mediated degradation in a time-dependent manner in the liver. As to expression, expressed in pineal gland and retina.

Its subcellular location is the nucleus. It localises to the cytoplasm. It is found in the PML body. Functionally, transcriptional activator which forms a core component of the circadian clock. The circadian clock, an internal time-keeping system, regulates various physiological processes through the generation of approximately 24 hour circadian rhythms in gene expression, which are translated into rhythms in metabolism and behavior. It is derived from the Latin roots 'circa' (about) and 'diem' (day) and acts as an important regulator of a wide array of physiological functions including metabolism, sleep, body temperature, blood pressure, endocrine, immune, cardiovascular, and renal function. Consists of two major components: the central clock, residing in the suprachiasmatic nucleus (SCN) of the brain, and the peripheral clocks that are present in nearly every tissue and organ system. Both the central and peripheral clocks can be reset by environmental cues, also known as Zeitgebers (German for 'timegivers'). The predominant Zeitgeber for the central clock is light, which is sensed by retina and signals directly to the SCN. The central clock entrains the peripheral clocks through neuronal and hormonal signals, body temperature and feeding-related cues, aligning all clocks with the external light/dark cycle. Circadian rhythms allow an organism to achieve temporal homeostasis with its environment at the molecular level by regulating gene expression to create a peak of protein expression once every 24 hours to control when a particular physiological process is most active with respect to the solar day. Transcription and translation of core clock components (CLOCK, NPAS2, BMAL1, BMAL2, PER1, PER2, PER3, CRY1 and CRY2) plays a critical role in rhythm generation, whereas delays imposed by post-translational modifications (PTMs) are important for determining the period (tau) of the rhythms (tau refers to the period of a rhythm and is the length, in time, of one complete cycle). A diurnal rhythm is synchronized with the day/night cycle, while the ultradian and infradian rhythms have a period shorter and longer than 24 hours, respectively. Disruptions in the circadian rhythms contribute to the pathology of cardiovascular diseases, cancer, metabolic syndromes and aging. A transcription/translation feedback loop (TTFL) forms the core of the molecular circadian clock mechanism. Transcription factors, CLOCK or NPAS2 and BMAL1 or BMAL2, form the positive limb of the feedback loop, act in the form of a heterodimer and activate the transcription of core clock genes and clock-controlled genes (involved in key metabolic processes), harboring E-box elements (5'-CACGTG-3') within their promoters. The core clock genes: PER1/2/3 and CRY1/2 which are transcriptional repressors form the negative limb of the feedback loop and interact with the CLOCK|NPAS2-BMAL1|BMAL2 heterodimer inhibiting its activity and thereby negatively regulating their own expression. This heterodimer also activates nuclear receptors NR1D1/2 and RORA/B/G, which form a second feedback loop and which activate and repress BMAL1 transcription, respectively. The preferred binding motif for the CLOCK-BMAL1 heterodimer is 5'-CACGTGA-3', which contains a flanking adenine nucleotide at the 3-prime end of the canonical 6-nucleotide E-box sequence. CLOCK specifically binds to the half-site 5'-CAC-3', while BMAL1 binds to the half-site 5'-GTGA-3'. Essential for the rhythmic interaction of CLOCK with ASS1 and plays a critical role in positively regulating CLOCK-mediated acetylation of ASS1. Plays a role in protecting against lethal sepsis by limiting the expression of immune checkpoint protein CD274 in macrophages in a PKM2-dependent manner. This chain is Basic helix-loop-helix ARNT-like protein 1 (BMAL1), found in Gallus gallus (Chicken).